Reading from the N-terminus, the 211-residue chain is Probable nicotinate-nucleotide adenylyltransferase (211 aa).

This sequence belongs to the NadD family.

It carries out the reaction nicotinate beta-D-ribonucleotide + ATP + H(+) = deamido-NAD(+) + diphosphate. It participates in cofactor biosynthesis; NAD(+) biosynthesis; deamido-NAD(+) from nicotinate D-ribonucleotide: step 1/1. Its function is as follows. Catalyzes the reversible adenylation of nicotinate mononucleotide (NaMN) to nicotinic acid adenine dinucleotide (NaAD). In Lactiplantibacillus plantarum (strain ATCC BAA-793 / NCIMB 8826 / WCFS1) (Lactobacillus plantarum), this protein is Probable nicotinate-nucleotide adenylyltransferase.